The chain runs to 166 residues: Sperm-egg fusion protein TMEM95 (166 aa).

The N-terminal stretch at 1–16 (MWTLALGGIFLAAVEA) is a signal peptide. Intrachain disulfides connect Cys17–Cys118, Cys20–Cys121, Cys105–Cys128, and Cys109–Cys134. Topologically, residues 17–145 (CVFCRFPDRE…PGSHDLWEAR (129 aa)) are extracellular. Residue Asn117 is glycosylated (N-linked (GlcNAc...) asparagine). The chain crosses the membrane as a helical span at residues 146-165 (ILLLFVCGTALLLGVPSLAV). Glu166 is a topological domain (cytoplasmic).

Belongs to the TMEM95 family. As to quaternary structure, does not interact with sperm-egg fusion proteins IZUMO1 or IZUMO1R/JUNO. N-glycosylated. Detected in testis and brain with higher levels in brain than testis.

The protein localises to the cytoplasmic vesicle. Its subcellular location is the secretory vesicle. It localises to the acrosome membrane. Functionally, sperm protein required for fusion of sperm with the egg membrane during fertilization. In Bos taurus (Bovine), this protein is Sperm-egg fusion protein TMEM95.